Consider the following 497-residue polypeptide: Acetyl-coenzyme A carboxylase carboxyl transferase subunit beta, chloroplastic (497 aa).

Residues Leu-230–Lys-497 enclose the CoA carboxyltransferase N-terminal domain. Residues Cys-234, Cys-237, Cys-253, and Cys-256 each coordinate Zn(2+). The C4-type zinc finger occupies Cys-234–Cys-256.

It belongs to the AccD/PCCB family. Acetyl-CoA carboxylase is a heterohexamer composed of biotin carboxyl carrier protein, biotin carboxylase and 2 subunits each of ACCase subunit alpha and ACCase plastid-coded subunit beta (accD). It depends on Zn(2+) as a cofactor.

It localises to the plastid. The protein localises to the chloroplast stroma. The enzyme catalyses N(6)-carboxybiotinyl-L-lysyl-[protein] + acetyl-CoA = N(6)-biotinyl-L-lysyl-[protein] + malonyl-CoA. It functions in the pathway lipid metabolism; malonyl-CoA biosynthesis; malonyl-CoA from acetyl-CoA: step 1/1. In terms of biological role, component of the acetyl coenzyme A carboxylase (ACC) complex. Biotin carboxylase (BC) catalyzes the carboxylation of biotin on its carrier protein (BCCP) and then the CO(2) group is transferred by the transcarboxylase to acetyl-CoA to form malonyl-CoA. This chain is Acetyl-coenzyme A carboxylase carboxyl transferase subunit beta, chloroplastic, found in Nandina domestica (Heavenly bamboo).